The following is a 229-amino-acid chain: Sodium channel modifier 1 (229 aa).

Residue S2 is modified to Phosphoserine. The Bipartite nuclear localization signal motif lies at 4–20; sequence KREGDDWSQLNVLKKRR. Residues 42–74 form a Matrin-type zinc finger; the sequence is FACAICPHRPVLDTLAMLTAHRAGKKHLSSLKL. A Glycyl lysine isopeptide (Lys-Gly) (interchain with G-Cter in SUMO2) cross-link involves residue K67. Disordered regions lie at residues 80 to 105 and 128 to 187; these read QTGKGTEQNPRQQNELKTESKTEAPL and RRKH…TKRR. A compositionally biased stretch (polar residues) spans 82 to 92; it reads GKGTEQNPRQQ. The segment covering 157-171 has biased composition (basic and acidic residues); the sequence is ISKEPEPRERSDAKE. A phosphoserine mark is found at S182 and S218. The segment at 187-229 is required for interaction with LUC7L2; it reads RVLNHYLTLRSSGWVPDGRGRWIKDENVEFDSDEEEPPDLPLD.

In terms of assembly, component of the minor spliceosome. Within this complex, interacts with RNF113A, as well as with SF3B1/SF3b155, SF3B2/SF3b145, SF3B3/SF3b130 and CDC5L. May interact with LUC7L2 and SNRNP70.

It is found in the nucleus. The protein resides in the nucleoplasm. The protein localises to the nucleus speckle. As a component of the minor spliceosome, involved in the splicing of U12-type introns in pre-mRNAs. Plays a role in the regulation of primary cilia length and Hedgehog signaling. This Mus musculus (Mouse) protein is Sodium channel modifier 1 (Scnm1).